Consider the following 393-residue polypeptide: Elongation factor Tu (393 aa).

In terms of domain architecture, tr-type G spans 6–204 (KPHINVGTIG…ALEKIELPVR (199 aa)). The tract at residues 15–22 (GHVDHGKT) is G1. 15-22 (GHVDHGKT) lines the GTP pocket. Thr22 is a Mg(2+) binding site. Residues 58–62 (GITIS) form a G2 region. Residues 79–82 (DCPG) form a G3 region. GTP contacts are provided by residues 79 to 83 (DCPGH) and 134 to 137 (NKCD). Residues 134–137 (NKCD) form a G4 region. The interval 172 to 174 (SAV) is G5.

The protein belongs to the TRAFAC class translation factor GTPase superfamily. Classic translation factor GTPase family. EF-Tu/EF-1A subfamily. As to quaternary structure, monomer.

It localises to the cytoplasm. The catalysed reaction is GTP + H2O = GDP + phosphate + H(+). Its function is as follows. GTP hydrolase that promotes the GTP-dependent binding of aminoacyl-tRNA to the A-site of ribosomes during protein biosynthesis. This chain is Elongation factor Tu, found in Anaplasma marginale (strain St. Maries).